Reading from the N-terminus, the 633-residue chain is Breast carcinoma-amplified sequence 1 homolog (633 aa).

Disordered stretches follow at residues 1–34 and 57–422; these read MGNQ…CVQN and SSKD…KLFW. Polar residues-rich tracts occupy residues 24–34 and 57–68; these read KVTSDNECVQN and SSKDNVATSSPK. Ser-127 carries the post-translational modification Phosphoserine. Residues 278-288 are compositionally biased toward polar residues; the sequence is VDTTENSSSIM. The span at 300-318 shows a compositional bias: basic and acidic residues; it reads TETKKDPEDTKATKADSVC. Ser-328 carries the phosphoserine modification. A Phosphothreonine modification is found at Thr-330. Residues 359–378 show a composition bias toward polar residues; it reads NSPTTSANLKSDKANFTPQE. Ser-360 carries the phosphoserine modification. The span at 400–410 shows a compositional bias: basic and acidic residues; the sequence is SEGRDSGKEKA. 2 positions are modified to phosphoserine: Ser-425 and Ser-443. Residues 454 to 633 form a disordered region; that stretch reads ESSLQTVDLS…VSIGPVGKSK (180 aa). Residues 471-481 are compositionally biased toward basic and acidic residues; that stretch reads TDVKVKEESKP. Residues 510-522 show a composition bias toward polar residues; that stretch reads KDSSCQTSNSVEK. Phosphothreonine is present on Thr-523. Ser-525 is subject to Phosphoserine. Residues 537 to 555 show a composition bias toward basic and acidic residues; it reads KNKETSSSKDKKSVDKKSA. Ser-601 and Ser-615 each carry phosphoserine. The segment at 614–633 is interacts with DYNLL1 AND DYNLL2; sequence MSDAQVQTDPVSIGPVGKSK.

As to quaternary structure, homodimer. Interacts with DYNLL1 and DYNLL2. In terms of tissue distribution, highly expressed in the brain and, more specifically, in oligodendrocytes. Expressed in the Schwann cells (at protein level).

Its subcellular location is the cytoplasm. In terms of biological role, required for myelination. In Mus musculus (Mouse), this protein is Breast carcinoma-amplified sequence 1 homolog (Bcas1).